Here is a 115-residue protein sequence, read N- to C-terminus: Large ribosomal subunit protein bL20 (115 aa).

The protein belongs to the bacterial ribosomal protein bL20 family.

Functionally, binds directly to 23S ribosomal RNA and is necessary for the in vitro assembly process of the 50S ribosomal subunit. It is not involved in the protein synthesizing functions of that subunit. This chain is Large ribosomal subunit protein bL20, found in Synechococcus sp. (strain RCC307).